The primary structure comprises 291 residues: GTPase Era (291 aa).

The Era-type G domain maps to 2 to 167; sequence KSGFVSIIGR…LDEIVKYLDE (166 aa). The segment at 10–17 is G1; that stretch reads GRTNAGKS. 10-17 contacts GTP; the sequence is GRTNAGKS. The G2 stretch occupies residues 36–40; sequence NATRR. Residues 57–60 are G3; sequence DTPG. Residues 57 to 61 and 116 to 119 each bind GTP; these read DTPGL and NKVD. The interval 116–119 is G4; it reads NKVD. Residues 146 to 148 form a G5 region; the sequence is YSS. A KH type-2 domain is found at 186–274; that stretch reads YRDFILESIY…LLKLFVTVKK (89 aa).

Belongs to the TRAFAC class TrmE-Era-EngA-EngB-Septin-like GTPase superfamily. Era GTPase family. As to quaternary structure, monomer.

The protein resides in the cytoplasm. It localises to the cell inner membrane. In terms of biological role, an essential GTPase that binds both GDP and GTP, with rapid nucleotide exchange. Plays a role in 16S rRNA processing and 30S ribosomal subunit biogenesis and possibly also in cell cycle regulation and energy metabolism. The sequence is that of GTPase Era from Campylobacter jejuni (strain RM1221).